The chain runs to 380 residues: Cytochrome b (380 aa).

The next 4 helical transmembrane spans lie at 34–54 (FGSL…LLAA), 78–99 (WLIR…YLHI), 114–134 (WNTG…GYVL), and 179–199 (FFTL…IHLT). Positions 84 and 98 each coordinate heme b. Heme b-binding residues include histidine 183 and histidine 197. Histidine 202 serves as a coordination point for a ubiquinone. Helical transmembrane passes span 227–247 (LKDI…ALFS), 289–309 (LGGV…PLLH), 321–341 (FSQL…WVGS), and 348–368 (FIII…ILFP).

This sequence belongs to the cytochrome b family. The cytochrome bc1 complex contains 11 subunits: 3 respiratory subunits (MT-CYB, CYC1 and UQCRFS1), 2 core proteins (UQCRC1 and UQCRC2) and 6 low-molecular weight proteins (UQCRH/QCR6, UQCRB/QCR7, UQCRQ/QCR8, UQCR10/QCR9, UQCR11/QCR10 and a cleavage product of UQCRFS1). This cytochrome bc1 complex then forms a dimer. The cofactor is heme b.

It is found in the mitochondrion inner membrane. Functionally, component of the ubiquinol-cytochrome c reductase complex (complex III or cytochrome b-c1 complex) that is part of the mitochondrial respiratory chain. The b-c1 complex mediates electron transfer from ubiquinol to cytochrome c. Contributes to the generation of a proton gradient across the mitochondrial membrane that is then used for ATP synthesis. This is Cytochrome b (MT-CYB) from Bugeranus carunculatus (Wattled crane).